A 214-amino-acid polypeptide reads, in one-letter code: Large ribosomal subunit protein uL3 (214 aa).

Residue Gln-153 is modified to N5-methylglutamine.

This sequence belongs to the universal ribosomal protein uL3 family. As to quaternary structure, part of the 50S ribosomal subunit. Forms a cluster with proteins L14 and L19. In terms of processing, methylated by PrmB.

Its function is as follows. One of the primary rRNA binding proteins, it binds directly near the 3'-end of the 23S rRNA, where it nucleates assembly of the 50S subunit. This Aromatoleum aromaticum (strain DSM 19018 / LMG 30748 / EbN1) (Azoarcus sp. (strain EbN1)) protein is Large ribosomal subunit protein uL3.